Here is a 110-residue protein sequence, read N- to C-terminus: PTS system oligo-beta-mannoside-specific EIIA component (110 aa).

The PTS EIIA type-3 domain maps to 9-107; it reads LTDEQISFQL…VKEMLDLFKT (99 aa). His-83 (tele-phosphohistidine intermediate) is an active-site residue. Position 83 is a phosphohistidine; by HPr (His-83).

It localises to the cytoplasm. In terms of biological role, the phosphoenolpyruvate-dependent sugar phosphotransferase system (sugar PTS), a major carbohydrate active transport system, catalyzes the phosphorylation of incoming sugar substrates concomitantly with their translocation across the cell membrane. The enzyme II GmuABC PTS system is involved in the transport of oligo-glucomannans such as cellobiose or mannobiose. This Bacillus subtilis (strain 168) protein is PTS system oligo-beta-mannoside-specific EIIA component.